The primary structure comprises 413 residues: Palmitoyltransferase ZDHHC6 (413 aa).

The Cytoplasmic segment spans residues M1–P24. Residues I25 to W45 form a helical membrane-spanning segment. Residues Y46 to N57 lie on the Lumenal side of the membrane. Residues F58–A78 traverse the membrane as a helical segment. Topologically, residues G79 to S143 are cytoplasmic. Residues Q99 to L149 enclose the DHHC domain. The active-site S-palmitoyl cysteine intermediate is the C129. The helical transmembrane segment at F144 to M164 threads the bilayer. Residues T165–P194 lie on the Lumenal side of the membrane. The chain crosses the membrane as a helical span at residues I195–G215. Topologically, residues T216–R413 are cytoplasmic. The SH3 domain occupies V313–C398. S-palmitoyl cysteine attachment occurs at residues C328, C329, and C343. The short motif at K410–R413 is the Di-lysine motif element.

The protein belongs to the DHHC palmitoyltransferase family. As to quaternary structure, homooligomerizes. Interacts with SELENOK. In terms of processing, palmitoylated at 3 different sites by ZDHHC16. The combination of the different palmitoylation events strongly affects the quaternary assembly of ZDHHC6, its localization, stability and function. Palmitoylation at Cys-328 accelerates the turnover of ZDHHC6. Depalmitoylated by LYPLA2.

The protein resides in the endoplasmic reticulum membrane. The enzyme catalyses L-cysteinyl-[protein] + hexadecanoyl-CoA = S-hexadecanoyl-L-cysteinyl-[protein] + CoA. The catalysed reaction is L-cysteinyl-[protein] + octadecanoyl-CoA = S-octadecanoyl-L-cysteinyl-[protein] + CoA. Endoplasmic reticulum palmitoyl acyltransferase that mediates palmitoylation of proteins such as AMFR, CALX, ITPR1 and TFRC. Palmitoylates calnexin (CALX), which is required for its association with the ribosome-translocon complex and efficient folding of glycosylated proteins. Mediates palmitoylation of AMFR, promoting AMFR distribution to the peripheral endoplasmic reticulum. Together with SELENOK, palmitoylates ITPR1 in immune cells, leading to regulate ITPR1 stability and function. Stearoyltransferase that mediates stearoylation of TFRC to inhibit TFRC-mediated activation of the JNK pathway and mitochondrial fragmentation. This Mus musculus (Mouse) protein is Palmitoyltransferase ZDHHC6.